The sequence spans 1048 residues: Ceruloplasmin (1048 aa).

The N-terminal stretch at 1 to 19 (MKIFLLCIFLILCGTSVWA) is a signal peptide. 3 consecutive Plastocyanin-like domains span residues 20–200 (KDKH…LIHC), 209–357 (KEKN…VQDC), and 370–554 (NVRH…MKIC). Na(+)-binding residues include Y55, G64, and Y67. The Cu(2+) site is built by H120 and H122. H120 lines the O2 pocket. K128 lines the Ca(2+) pocket. A glycan (N-linked (GlcNAc...) asparagine) is linked at N138. Positions 143, 146, and 147 each coordinate Ca(2+). C174 and C200 form a disulfide bridge. Positions 180 and 182 each coordinate Cu(2+). Residue H180 coordinates O2. N227 is a glycosylation site (N-linked (GlcNAc...) asparagine). S256 serves as a coordination point for Na(+). C276 and C357 are oxidised to a cystine. Residues H295, C338, and H343 each coordinate Cu(2+). Na(+)-binding residues include F408, G417, and Y420. C530 and C554 form a disulfide bridge. N-linked (GlcNAc...) asparagine glycans are attached at residues N556 and N582. Residues 564–712 (RLKNVDKEFY…MKQKYTVSQC (149 aa)) form the Plastocyanin-like 4 domain. S611 contacts Na(+). A disulfide bond links C631 and C712. Residues H650, C693, H698, and M703 each contribute to the Cu(2+) site. Residue C693 is the Nucleophile; for glutathione peroxidase activity of the active site. Position 716 is a phosphoserine (S716). 2 consecutive Plastocyanin-like domains span residues 724-894 (GERT…LIVC) and 902-1044 (SNPI…PNEE). N-linked (GlcNAc...) asparagine glycosylation is present at N756. Na(+) contacts are provided by F761, G770, and Y773. A disulfide bridge links C868 with C894. An N-linked (GlcNAc...) asparagine glycan is attached at N920. S949 contributes to the Na(+) binding site. Cu(2+) is bound by residues H977, H980, H982, H1022, C1023, H1024, H1028, and M1033. 2 residues coordinate O2: H980 and H982. H1024 contacts O2.

The protein belongs to the multicopper oxidase family. Found in a complex with MPO and LTF; interacts directly with MPO and LTF, which allows Fe(3+) incorporation into LTF, activation of CP ferroxidase activity and protection of CP antioxidant properties by MPO. Cu(2+) serves as cofactor. In terms of tissue distribution, expressed by the liver and secreted in plasma. Also expressed in the hypothalamus, spleen and uterus. No expression in the cortex, heart, intestine or kidney.

It localises to the secreted. It carries out the reaction 4 Fe(2+) + O2 + 4 H(+) = 4 Fe(3+) + 2 H2O. The catalysed reaction is 4 Cu(+) + O2 + 4 H(+) = 4 Cu(2+) + 2 H2O. It catalyses the reaction a hydroperoxide + 2 glutathione = an alcohol + glutathione disulfide + H2O. The enzyme catalyses 4 nitric oxide + O2 + 2 H2O = 4 nitrite + 4 H(+). It carries out the reaction 2 glutathione + H2O2 = glutathione disulfide + 2 H2O. Functionally, multifunctional blue, copper-binding (6-7 atoms per molecule) glycoprotein. It has ferroxidase activity oxidizing Fe(2+) to Fe(3+) without releasing radical oxygen species. It is involved in iron transport across the cell membrane. Copper ions provide a large number of enzymatic activites. Oxidizes highly toxic ferrous ions to the ferric state for further incorporation onto apo-transferrins, catalyzes Cu(+) oxidation and promotes the oxidation of biogenic amines such as norepinephrin and serotonin. Provides Cu(2+) ions for the ascorbate-mediated deaminase degradation of the heparan sulfate chains of GPC1. Has glutathione peroxidase-like activity, can remove both hydrogen peroxide and lipid hydroperoxide in the presence of thiols. Also shows NO-oxidase and NO2 synthase activities that determine endocrine NO homeostasis. The protein is Ceruloplasmin (CP) of Ovis aries (Sheep).